We begin with the raw amino-acid sequence, 130 residues long: MTTKRKAYVRTMAPNWWQQLGFYRFYMLREGTSIPAVWFSVLLIYGVFALKSGPAGWEGFVSFLQNPLVLFLNILTLFAALLHTKTWFELAPKAVNIIVKSEKMGPEPMIKALWVVTVVASAIILAVALL.

3 consecutive transmembrane segments (helical) span residues 30 to 50, 60 to 80, and 110 to 130; these read EGTS…VFAL, FVSF…LFAA, and IKAL…VALL.

Belongs to the FrdC family. Part of an enzyme complex containing four subunits: a flavoprotein (FrdA), an iron-sulfur protein (FrdB), and two hydrophobic anchor proteins (FrdC and FrdD).

It is found in the cell inner membrane. Functionally, two distinct, membrane-bound, FAD-containing enzymes are responsible for the catalysis of fumarate and succinate interconversion; fumarate reductase is used in anaerobic growth, and succinate dehydrogenase is used in aerobic growth. Anchors the catalytic components of the fumarate reductase complex to the cell inner membrane, binds quinones. This is Fumarate reductase subunit C from Yersinia pseudotuberculosis serotype O:1b (strain IP 31758).